We begin with the raw amino-acid sequence, 530 residues long: Probable basic-leucine zipper transcription factor L (530 aa).

2 stretches are compositionally biased toward low complexity: residues 1-17 (MYSP…SPES) and 24-39 (SINN…ANQS). Residues 1-76 (MYSPSSPQSS…QSAALSRSRK (76 aa)) form a disordered region. In terms of domain architecture, bZIP spans 55-118 (VKKRQVRLLK…FETKSRLEFL (64 aa)). Positions 56 to 77 (KKRQVRLLKNRQSAALSRSRKK) are basic motif. A leucine-zipper region spans residues 83–104 (LESKAQELTHSTQELHVQYNKI). Disordered regions lie at residues 142–177 (NNIK…TTPV), 216–258 (SQNK…SPTP), and 389–481 (HHHH…SQIN). Composition is skewed to low complexity over residues 149–176 (RSNS…STTP) and 220–247 (NNNN…NTTN). Over residues 248–257 (LLDQQQQSPT) the composition is skewed to polar residues. Over residues 436-478 (SSSPSSSSTSSPSTSSPSTPKSMGFPSPIFIGSSGSGPSSSGS) the composition is skewed to low complexity.

The protein belongs to the bZIP family.

The protein localises to the nucleus. In terms of biological role, probable transcriptional regulator. In Dictyostelium discoideum (Social amoeba), this protein is Probable basic-leucine zipper transcription factor L (bzpL).